The chain runs to 582 residues: Protein alan shepard (582 aa).

Positions 1–12 are enriched in pro residues; it reads MHPRYSPAPPPQ. The tract at residues 1-73 is disordered; it reads MHPRYSPAPP…AAPPTSRSAF (73 aa). The residue at position 5 (Tyr-5) is a Phosphotyrosine. A compositionally biased stretch (low complexity) spans 13 to 24; it reads QQQQMGGPPHQQ. Positions 25 to 35 are enriched in gly residues; that stretch reads QGGGGGGGGSM. Residues 37–57 show a composition bias toward polar residues; it reads GPSNAQQLPPQIPRSQNYSNG. Over residues 58–72 the composition is skewed to low complexity; it reads SSSSAAAAPPTSRSA. 2 positions are modified to phosphotyrosine: Tyr-125 and Tyr-142. Positions 164-225 are disordered; the sequence is PATTTYGQRV…TVQNQNQQGG (62 aa). The span at 178–225 shows a compositional bias: low complexity; it reads SPSNTNSSSSSNTGSQSGTLSTSLSNTTNTNTNMGPNGTVQNQNQQGG. RRM domains follow at residues 231–304 and 310–389; these read TNLY…MAKQ and TNLY…FADG. The disordered stretch occupies residues 555-582; the sequence is PMTDSEQASTAASPDEAYTQYPHQAAPK.

Functionally, has a role in the perception of gravity. The chain is Protein alan shepard from Drosophila erecta (Fruit fly).